The primary structure comprises 288 residues: 4-hydroxy-tetrahydrodipicolinate synthase (288 aa).

Threonine 42 lines the pyruvate pocket. Tyrosine 129 (proton donor/acceptor) is an active-site residue. The active-site Schiff-base intermediate with substrate is lysine 157. Isoleucine 198 is a binding site for pyruvate.

This sequence belongs to the DapA family. Homotetramer; dimer of dimers.

Its subcellular location is the cytoplasm. It carries out the reaction L-aspartate 4-semialdehyde + pyruvate = (2S,4S)-4-hydroxy-2,3,4,5-tetrahydrodipicolinate + H2O + H(+). It participates in amino-acid biosynthesis; L-lysine biosynthesis via DAP pathway; (S)-tetrahydrodipicolinate from L-aspartate: step 3/4. Functionally, catalyzes the condensation of (S)-aspartate-beta-semialdehyde [(S)-ASA] and pyruvate to 4-hydroxy-tetrahydrodipicolinate (HTPA). The sequence is that of 4-hydroxy-tetrahydrodipicolinate synthase from Chlamydia abortus (strain DSM 27085 / S26/3) (Chlamydophila abortus).